The chain runs to 456 residues: Hydroxyproline dehydrogenase (456 aa).

An N6-acetyllysine mark is found at Lys-310 and Lys-320.

It belongs to the proline oxidase family. Requires FAD as cofactor.

It catalyses the reaction trans-4-hydroxy-L-proline + a quinone = (3R,5S)-1-pyrroline-3-hydroxy-5-carboxylate + a quinol + H(+). The enzyme catalyses L-proline + a quinone = (S)-1-pyrroline-5-carboxylate + a quinol + H(+). Functionally, dehydrogenase that converts trans-4-L-hydroxyproline to delta-1-pyrroline-3-hydroxy-5-carboxylate (Hyp) using ubiquinone-10 as the terminal electron acceptor. Can also use proline as a substrate but with a very much lower efficiency. Does not react with other diastereomers of Hyp: trans-4-D-hydroxyproline and cis-4-L-hydroxyproline. Ubiquininone analogs such as menadione, duroquinone and ubiquinone-1 react more efficiently than oxygen as the terminal electron acceptor during catalysis. In Mus musculus (Mouse), this protein is Hydroxyproline dehydrogenase.